A 398-amino-acid polypeptide reads, in one-letter code: MSAASPASIIQELASAAKQYENNESGAREALIAQSRALIASLEVPSEFIQHTFWSQPALSAIVRLATDVNLFQYLKDAQEEGLNAEALASKTGMDVSLFARLARHLVAMNVITSRNGVFYGTALSNGLAAENYQQSIRFCHDVSRPSFGAFPSFFKGNGYKTPALGTTDGPFQSAHKVDISFPQWLVGNPPYLQYFNSYMSAYRAGKPNWCDNGFYPVADRLLNGFDASVSDVLLVDVGGGRGHDIATFGSQFSPLPGRLVLQDREQVINSIPADESRQFEATTHDIFTTQPVKHARAYYMHSVPHGFGDEDAVKIMANLVPALAKGYSRVLLNEIVVDEERPVMSATNMDLIMLAHMGAKERTEADWRSILTRAGLKVVNIYSYPGVAESLIEAELA.

Residue Ser144 participates in (4E,8E)-10-(4,6-dihydroxy-7-methyl-3-oxo-1,3-dihydro-2-benzofuran-5-yl)-4,8-dimethyldeca-4,8-dienoate binding. A 4-farnesyl-3,5-dihydroxy-6-methylphthalide-binding site is contributed by Ser144. Position 144 (Ser144) interacts with 6-O-desmethylmycophenolate. Asn197 provides a ligand contact to S-adenosyl-L-homocysteine. Tyr199 is a (4E,8E)-10-(4,6-dihydroxy-7-methyl-3-oxo-1,3-dihydro-2-benzofuran-5-yl)-4,8-dimethyldeca-4,8-dienoate binding site. Tyr199 contacts 4-farnesyl-3,5-dihydroxy-6-methylphthalide. A 6-O-desmethylmycophenolate-binding site is contributed by Tyr199. S-adenosyl-L-homocysteine is bound by residues Tyr203, Asp237, Gly239, His244, Asp245, Asp264, and Arg265. Asp264 is an S-adenosyl-L-methionine binding site. Residues Arg265 and Gln267 each contribute to the (4E,8E)-10-(4,6-dihydroxy-7-methyl-3-oxo-1,3-dihydro-2-benzofuran-5-yl)-4,8-dimethyldeca-4,8-dienoate site. A 6-O-desmethylmycophenolate-binding site is contributed by Arg265. Asp286, Ile287, and His302 together coordinate S-adenosyl-L-homocysteine. (4E,8E)-10-(4,6-dihydroxy-7-methyl-3-oxo-1,3-dihydro-2-benzofuran-5-yl)-4,8-dimethyldeca-4,8-dienoate is bound at residue Ser303. 4-farnesyl-3,5-dihydroxy-6-methylphthalide is bound at residue Ser303. Ser303 contributes to the 6-O-desmethylmycophenolate binding site. The Proton acceptor role is filled by His306. Active-site residues include Glu335 and Glu362.

This sequence belongs to the class I-like SAM-binding methyltransferase superfamily. Cation-independent O-methyltransferase family. In terms of assembly, homodimer.

The protein resides in the cytoplasm. Its subcellular location is the cytosol. It catalyses the reaction (4E,8E)-10-(4,6-dihydroxy-7-methyl-3-oxo-1,3-dihydro-2-benzofuran-5-yl)-4,8-dimethyldeca-4,8-dienoate + S-adenosyl-L-methionine = (4E,8E)-10-(4-hydroxy-6-methoxy-7-methyl-3-oxo-1,3-dihydro-2-benzofuran-5-yl)-4,8-dimethyldeca-4,8-dienoate + S-adenosyl-L-homocysteine + H(+). The catalysed reaction is 4-farnesyl-3,5-dihydroxy-6-methylphthalide + S-adenosyl-L-methionine = 4-farnesyl-3,5-dihydroxy-6-methoxylphthalide + S-adenosyl-L-homocysteine + H(+). It carries out the reaction 6-O-desmethylmycophenolate + S-adenosyl-L-methionine = mycophenolate + S-adenosyl-L-homocysteine + H(+). It participates in secondary metabolite biosynthesis; terpenoid biosynthesis. In terms of biological role, O-methyltransferase; part of the gene cluster that mediates the biosynthesis of mycophenolic acid (MPA), the first isolated antibiotic natural product in the world obtained from a culture of Penicillium brevicompactum in 1893. MpaG' catalyzes the 5-O-methylation of three precursors in MPA biosynthesis including demethylmycophenolic acid (DMMPA), 4-farnesyl-3,5-dihydroxy-6-methylphthalide (FDHMP), and an intermediate containing three fewer carbon atoms compared to FDHMP (FDHMP-3C) with different catalytic efficiencies. The first step of the pathway is the synthesis of 5-methylorsellinic acid (5MOA) by the cytosolic polyketide synthase mpaC. 5MOA is then converted to the phthalide compound 5,7-dihydroxy-4,6-dimethylphthalide (DHMP) by the endoplasmic reticulum-bound cytochrome P450 monooxygenase mpaDE. MpaDE first catalyzes hydroxylation of 5-MOA to 4,6-dihydroxy-2-(hydroxymethyl)-3-methylbenzoic acid (DHMB). MpaDE then acts as a lactone synthase that catalyzes the ring closure to convert DHMB into DHMP. The next step is the prenylation of DHMP by the Golgi apparatus-associated prenyltransferase mpaA to yield farnesyl-DHMP (FDHMP). The ER-bound oxygenase mpaB then mediates the oxidative cleavage the C19-C20 double bond in FDHMP to yield FDHMP-3C via a mycophenolic aldehyde intermediate. The O-methyltransferase mpaG catalyzes the methylation of FDHMP-3C to yield MFDHMP-3C. MpaG and mpaB can also switch the order in which they act and, in this case, the conversion of FDHMP to MFDHMP-3C can take place via 5-O-methyl-FDHMP (MFDHMP). After the cytosolic methylation of FDHMP-3C, MFDHMP-3C enters into peroxisomes probably via free diffusion due to its low molecular weight. Upon a peroxisomal CoA ligation reaction, catalyzed by a beta-oxidation component enzyme acyl-CoA ligase ACL891, MFDHMP-3C-CoA would then be restricted to peroxisomes for the following beta-oxidation pathway steps. The peroxisomal beta-oxidation machinery than converts MFDHMP-3C-CoA into MPA_CoA, via a beta-oxidation chain-shortening process. Finally mpaH acts as a peroxisomal acyl-CoA hydrolase with high substrate specificity toward MPA-CoA to release the final product MPA. MpaH can also hydrolyze DMMPA-CoA to release demethylmycophenolic acid (DMMPA) that is further converted to MPA by mpaG. This is O-methyltransferase mpaG' from Penicillium brevicompactum.